Reading from the N-terminus, the 170-residue chain is Adenine phosphoribosyltransferase (170 aa).

It belongs to the purine/pyrimidine phosphoribosyltransferase family. As to quaternary structure, homodimer.

The protein resides in the cytoplasm. The catalysed reaction is AMP + diphosphate = 5-phospho-alpha-D-ribose 1-diphosphate + adenine. The protein operates within purine metabolism; AMP biosynthesis via salvage pathway; AMP from adenine: step 1/1. Its function is as follows. Catalyzes a salvage reaction resulting in the formation of AMP, that is energically less costly than de novo synthesis. This is Adenine phosphoribosyltransferase from Bacillus subtilis (strain 168).